We begin with the raw amino-acid sequence, 151 residues long: UPF0208 membrane protein YPTB2595 (151 aa).

The next 2 helical transmembrane spans lie at 46–66 (FGIRFMPPLAIFTLTWQIALG) and 69–89 (LGPAIATALFACGLPLQGLWW).

It belongs to the UPF0208 family.

Its subcellular location is the cell inner membrane. This chain is UPF0208 membrane protein YPTB2595, found in Yersinia pseudotuberculosis serotype I (strain IP32953).